Reading from the N-terminus, the 340-residue chain is MSIPRPKLALTLGDPAGIGPEIVLKALADPEVQSCAHITVVGDRQVLEATYRLLRDRSPAPLAHPAGIPMLECDTGFRLQPGCIGQGDADSGAVSFAYLRTAVERTLQGEFQGIVTAPIAKYLWHRAGHRFPGQTEVLAQLSRSEHYGMMFVARSPHSGWQMRVLLATTHIPLGQVPTVLTPERVRTALDLLVGSLRHTFGIPDPVIAVAGLNPHAGEQGQLGSEEKEWLTELLRTYAHAQIWGPLPPDTMWLAPAQAWHGQGSPAVADAYLALYHDQGLIPVKMLAFDRAVNLTTGLPFVRTSPDHGTAFDIAGQGVARCESLKQAILLAAELLGKNPS.

T135 contributes to the substrate binding site. Positions 170, 215, and 276 each coordinate a divalent metal cation. Substrate-binding residues include K284, N293, and R302.

This sequence belongs to the PdxA family. As to quaternary structure, homodimer. Requires a divalent metal cation as cofactor.

Its subcellular location is the cytoplasm. It catalyses the reaction 4-(phosphooxy)-L-threonine + NAD(+) = 3-amino-2-oxopropyl phosphate + CO2 + NADH. It functions in the pathway cofactor biosynthesis; pyridoxine 5'-phosphate biosynthesis; pyridoxine 5'-phosphate from D-erythrose 4-phosphate: step 4/5. Its function is as follows. Catalyzes the NAD(P)-dependent oxidation of 4-(phosphooxy)-L-threonine (HTP) into 2-amino-3-oxo-4-(phosphooxy)butyric acid which spontaneously decarboxylates to form 3-amino-2-oxopropyl phosphate (AHAP). This chain is 4-hydroxythreonine-4-phosphate dehydrogenase, found in Synechococcus sp. (strain JA-2-3B'a(2-13)) (Cyanobacteria bacterium Yellowstone B-Prime).